Consider the following 218-residue polypeptide: Small ribosomal subunit protein uS3c (218 aa).

The 72-residue stretch at 47-118 (VQKNIRISSG…KLNIAITRIS (72 aa)) folds into the KH type-2 domain.

It belongs to the universal ribosomal protein uS3 family. As to quaternary structure, part of the 30S ribosomal subunit.

The protein localises to the plastid. Its subcellular location is the chloroplast. The sequence is that of Small ribosomal subunit protein uS3c (rps3) from Aethionema cordifolium (Lebanon stonecress).